A 222-amino-acid chain; its full sequence is Ubiquitin-conjugating enzyme E2 S (222 aa).

At Met-1 the chain carries N-acetylmethionine. Residues His-11–Gly-157 form the UBC core domain. Cys-95 serves as the catalytic Glycyl thioester intermediate. Residues Gly-156–Leu-222 are disordered. A Phosphoserine modification is found at Ser-173. Residues Ala-208–Leu-222 are compositionally biased toward basic residues.

It belongs to the ubiquitin-conjugating enzyme family. As to quaternary structure, component of the APC/C complex, composed of at least 14 distinct subunits that assemble into a complex of at least 19 chains with a combined molecular mass of around 1.2 MDa. Within this complex, directly interacts with ANAPC2 and ANAPC4. Interacts with CDC20, FZR1/CDH1 and VHL. Autoubiquitinated by the APC/C complex during G1, leading to its degradation by the proteasome.

It carries out the reaction S-ubiquitinyl-[E1 ubiquitin-activating enzyme]-L-cysteine + [E2 ubiquitin-conjugating enzyme]-L-cysteine = [E1 ubiquitin-activating enzyme]-L-cysteine + S-ubiquitinyl-[E2 ubiquitin-conjugating enzyme]-L-cysteine.. It participates in protein modification; protein ubiquitination. In terms of biological role, accepts ubiquitin from the E1 complex and catalyzes its covalent attachment to other proteins. Catalyzes 'Lys-11'-linked polyubiquitination. Acts as an essential factor of the anaphase promoting complex/cyclosome (APC/C), a cell cycle-regulated ubiquitin ligase that controls progression through mitosis. Acts by specifically elongating 'Lys-11'-linked polyubiquitin chains initiated by the E2 enzyme UBE2C/UBCH10 on APC/C substrates, enhancing the degradation of APC/C substrates by the proteasome and promoting mitotic exit. Also acts by elongating ubiquitin chains initiated by the E2 enzyme UBE2D1/UBCH5 in vitro; it is however unclear whether UBE2D1/UBCH5 acts as an E2 enzyme for the APC/C in vivo. Also involved in ubiquitination and subsequent degradation of VHL, resulting in an accumulation of HIF1A. In vitro able to promote polyubiquitination using all 7 ubiquitin Lys residues, except 'Lys-48'-linked polyubiquitination. This is Ubiquitin-conjugating enzyme E2 S (UBE2S) from Homo sapiens (Human).